Reading from the N-terminus, the 459-residue chain is MLKLLLPMIMLLPTSWLCKKNHLSYTTLLFSFTIALLSLQWLKPPFELTTTFSNTYMGVDPISTPLLILTSWMTPLMILVSKNHLIQEPLSRKRTFTTTIISLQISLTLAFSALEMMLFFTMFEATLIPTLIIITRWGNQMERLSAGTYFLFYTLIGSLPLLIALTSLHTNYNTLSLFILQLNPPNLTNSWAHTMWWFALLMAFMIKMPLYGLHLWLPKAHVEAPIAGSMILAGVLLKLGGYGIIRVTLMLNPLTKSLSYPFMTLSLWGIIMTGLICLRQTDLKSLIAYSSVGLMGLVISAALLQTPLSITGAIILMIAHGLSSSMLFCLANTNYERTHNRTLLLTHSMQTLLPLMTIWWLLASLMNMALPPTINLMGELTIIASLFSWANITIILTGLGTLISALYSLHMFSTTQWGGTPPHHMHTITPSHTREHLIMMLHMVPLILLMMKPQLMTTF.

A run of 13 helical transmembrane segments spans residues 22–42 (HLSY…LQWL), 61–81 (PIST…ILVS), 94–113 (RTFT…AFSA), 114–134 (LEMM…LIII), 146–166 (AGTY…IALT), 197–217 (WFAL…HLWL), 225–245 (PIAG…YGII), 258–278 (LSYP…LICL), 285–304 (SLIA…AALL), 308–330 (LSIT…LFCL), 352–372 (LLPL…ALPP), 380–400 (LTII…TGLG), and 437–457 (LIMM…QLMT).

The protein belongs to the complex I subunit 4 family.

The protein localises to the mitochondrion membrane. The enzyme catalyses a ubiquinone + NADH + 5 H(+)(in) = a ubiquinol + NAD(+) + 4 H(+)(out). In terms of biological role, core subunit of the mitochondrial membrane respiratory chain NADH dehydrogenase (Complex I) that is believed to belong to the minimal assembly required for catalysis. Complex I functions in the transfer of electrons from NADH to the respiratory chain. The immediate electron acceptor for the enzyme is believed to be ubiquinone. This Pelomedusa subrufa (African side-necked turtle) protein is NADH-ubiquinone oxidoreductase chain 4 (MT-ND4).